The primary structure comprises 239 residues: Endonuclease V (239 aa).

2 residues coordinate Mg(2+): Asp-48 and Asp-116.

Belongs to the endonuclease V family. Mg(2+) serves as cofactor.

It localises to the cytoplasm. It catalyses the reaction Endonucleolytic cleavage at apurinic or apyrimidinic sites to products with a 5'-phosphate.. DNA repair enzyme involved in the repair of deaminated bases. Selectively cleaves double-stranded DNA at the second phosphodiester bond 3' to a deoxyinosine leaving behind the intact lesion on the nicked DNA. The chain is Endonuclease V from Xanthomonas oryzae pv. oryzae (strain MAFF 311018).